The primary structure comprises 383 residues: Cytochrome b (383 aa).

A run of 4 helical transmembrane segments spans residues 31-51, 75-97, 112-132, and 178-198; these read FGSL…FLAM, WLMR…VHIF, LWCS…MGYV, and FFSL…IHLI. Heme b is bound by residues histidine 81 and histidine 95. Heme b-binding residues include histidine 182 and histidine 196. An a ubiquinone-binding site is contributed by histidine 201. Transmembrane regions (helical) follow at residues 224–244, 288–308, 320–340, and 347–367; these read FYTK…IFIF, IGGV…PFTN, IFKV…WVGQ, and YTEI…IIIP.

It belongs to the cytochrome b family. In terms of assembly, fungal cytochrome b-c1 complex contains 10 subunits; 3 respiratory subunits, 2 core proteins and 5 low-molecular weight proteins. Cytochrome b-c1 complex is a homodimer. The cofactor is heme b.

The protein resides in the mitochondrion inner membrane. Functionally, component of the ubiquinol-cytochrome c reductase complex (complex III or cytochrome b-c1 complex) that is part of the mitochondrial respiratory chain. The b-c1 complex mediates electron transfer from ubiquinol to cytochrome c. Contributes to the generation of a proton gradient across the mitochondrial membrane that is then used for ATP synthesis. The sequence is that of Cytochrome b (cob) from Phytophthora megasperma (Potato pink rot fungus).